The primary structure comprises 46 residues: Protein PsbN (46 aa).

Residues 10–30 (VAIAVLAALLGLTGFGVYTAF) form a helical membrane-spanning segment.

It belongs to the PsbN family.

The protein localises to the cellular thylakoid membrane. Its function is as follows. May play a role in photosystem I and II biogenesis. This chain is Protein PsbN, found in Synechococcus sp. (strain WH7803).